The chain runs to 813 residues: Leucine--tRNA ligase (813 aa).

The short motif at 40 to 51 (SYPSGSKLHAGH) is the 'HIGH' region element. Positions 572 to 576 (KMSKS) match the 'KMSKS' region motif. Lys-575 serves as a coordination point for ATP.

This sequence belongs to the class-I aminoacyl-tRNA synthetase family.

Its subcellular location is the cytoplasm. The catalysed reaction is tRNA(Leu) + L-leucine + ATP = L-leucyl-tRNA(Leu) + AMP + diphosphate. In Clostridium botulinum (strain Langeland / NCTC 10281 / Type F), this protein is Leucine--tRNA ligase.